A 318-amino-acid polypeptide reads, in one-letter code: D-alanine--D-alanine ligase (318 aa).

Residues 117–315 (KQVWLSLGLS…FETLVWRVLE (199 aa)) form the ATP-grasp domain. ATP is bound at residue 146 to 201 (ARQIGLPIIVKPANEGSSVGVSRVFDQAQLEEAVTLAARYDGALLMEQLIEGDELT). 3 residues coordinate Mg(2+): D268, E282, and N284.

The protein belongs to the D-alanine--D-alanine ligase family. Mg(2+) serves as cofactor. Requires Mn(2+) as cofactor.

The protein localises to the cytoplasm. The catalysed reaction is 2 D-alanine + ATP = D-alanyl-D-alanine + ADP + phosphate + H(+). It functions in the pathway cell wall biogenesis; peptidoglycan biosynthesis. Cell wall formation. The protein is D-alanine--D-alanine ligase of Xanthomonas axonopodis pv. citri (strain 306).